A 365-amino-acid chain; its full sequence is Chorismate synthase (365 aa).

Residues 41–61 (IQKELDRRRPGQSEVSTPRHE) form a disordered region. R48 provides a ligand contact to NADP(+). Residues 125-127 (RSS), G285, 300-304 (KPTPS), and R327 contribute to the FMN site.

It belongs to the chorismate synthase family. It depends on FMNH2 as a cofactor.

The catalysed reaction is 5-O-(1-carboxyvinyl)-3-phosphoshikimate = chorismate + phosphate. Its pathway is metabolic intermediate biosynthesis; chorismate biosynthesis; chorismate from D-erythrose 4-phosphate and phosphoenolpyruvate: step 7/7. In terms of biological role, catalyzes the anti-1,4-elimination of the C-3 phosphate and the C-6 proR hydrogen from 5-enolpyruvylshikimate-3-phosphate (EPSP) to yield chorismate, which is the branch point compound that serves as the starting substrate for the three terminal pathways of aromatic amino acid biosynthesis. This reaction introduces a second double bond into the aromatic ring system. The sequence is that of Chorismate synthase from Methanosarcina barkeri (strain Fusaro / DSM 804).